The sequence spans 375 residues: Trichodiene synthase (375 aa).

This sequence belongs to the trichodiene synthase family.

It catalyses the reaction (2E,6E)-farnesyl diphosphate = trichodiene + diphosphate. Its pathway is sesquiterpene biosynthesis; trichothecene biosynthesis. Its function is as follows. TS is a member of the terpene cyclase group of enzymes. It catalyzes the isomerization and cyclization of farnesyl pyro-phosphate to form trichodiene, the first cyclic intermediate in the biosynthetic pathway for trichothecenes. It serves to branch trichothecene biosynthesis from the isoprenoid pathway. In Fusarium pseudograminearum (Wheat and barley crown-rot fungus), this protein is Trichodiene synthase (TRI5).